A 343-amino-acid polypeptide reads, in one-letter code: Tetraacyldisaccharide 4'-kinase (343 aa).

51-58 is an ATP binding site; it reads HGGGAGKT.

This sequence belongs to the LpxK family.

The enzyme catalyses a lipid A disaccharide + ATP = a lipid IVA + ADP + H(+). It participates in glycolipid biosynthesis; lipid IV(A) biosynthesis; lipid IV(A) from (3R)-3-hydroxytetradecanoyl-[acyl-carrier-protein] and UDP-N-acetyl-alpha-D-glucosamine: step 6/6. Transfers the gamma-phosphate of ATP to the 4'-position of a tetraacyldisaccharide 1-phosphate intermediate (termed DS-1-P) to form tetraacyldisaccharide 1,4'-bis-phosphate (lipid IVA). The polypeptide is Tetraacyldisaccharide 4'-kinase (Rhodopseudomonas palustris (strain BisB18)).